A 340-amino-acid chain; its full sequence is DNA-directed RNA polymerase subunit alpha (340 aa).

Residues Met1 to Asp237 form an alpha N-terminal domain (alpha-NTD) region. An alpha C-terminal domain (alpha-CTD) region spans residues Phe256–Glu340.

It belongs to the RNA polymerase alpha chain family. Homodimer. The RNAP catalytic core consists of 2 alpha, 1 beta, 1 beta' and 1 omega subunit. When a sigma factor is associated with the core the holoenzyme is formed, which can initiate transcription.

It catalyses the reaction RNA(n) + a ribonucleoside 5'-triphosphate = RNA(n+1) + diphosphate. Functionally, DNA-dependent RNA polymerase catalyzes the transcription of DNA into RNA using the four ribonucleoside triphosphates as substrates. This Desulforapulum autotrophicum (strain ATCC 43914 / DSM 3382 / VKM B-1955 / HRM2) (Desulfobacterium autotrophicum) protein is DNA-directed RNA polymerase subunit alpha.